The sequence spans 382 residues: Heme A synthase (382 aa).

8 consecutive transmembrane segments (helical) span residues 25 to 45 (GAVRAWLYLLAVLVVAMVAVG), 112 to 132 (LLGRIVGLVFFLPFAWFWARG), 138 to 158 (LLLGLLGLGLLGGLQGAIGWI), 176 to 196 (LALHLTTASLILAGLVWLAAG), 211 to 231 (VVAGLLPALVLVQIWLGGLVA), 270 to 290 (LALVQFNHRLFAYLVVVVAIA), 303 to 323 (AAAGRAMGLAALATAQMGLGI), and 327 to 347 (LLHVPLWAGLAHQVFAMAVLI). Heme is bound at residue H277. H338 contributes to the heme binding site.

This sequence belongs to the COX15/CtaA family. Type 2 subfamily. In terms of assembly, interacts with CtaB. Requires heme b as cofactor.

It is found in the cell membrane. It carries out the reaction Fe(II)-heme o + 2 A + H2O = Fe(II)-heme a + 2 AH2. It functions in the pathway porphyrin-containing compound metabolism; heme A biosynthesis; heme A from heme O: step 1/1. Its function is as follows. Catalyzes the conversion of heme O to heme A by two successive hydroxylations of the methyl group at C8. The first hydroxylation forms heme I, the second hydroxylation results in an unstable dihydroxymethyl group, which spontaneously dehydrates, resulting in the formyl group of heme A. The protein is Heme A synthase of Methylorubrum extorquens (strain PA1) (Methylobacterium extorquens).